A 378-amino-acid chain; its full sequence is L-asparaginase-like protein GF11609 (378 aa).

The first 21 residues, 1-21 (MCSPLPLLILRLLLLTHPSLG), serve as a signal peptide directing secretion. Intrachain disulfides connect Cys-71-Cys-76, Cys-170-Cys-186, and Cys-325-Cys-352.

This sequence belongs to the Ntn-hydrolase family.

The chain is L-asparaginase-like protein GF11609 from Drosophila ananassae (Fruit fly).